The sequence spans 251 residues: Squamosa promoter-binding-like protein 4 (251 aa).

Residues M1–P15 show a composition bias toward pro residues. A disordered region spans residues M1–G64. The segment covering A24–A43 has biased composition (low complexity). The SBP-type zinc finger occupies E65–P142. Residues C68, C73, C90, H93, C109, C112, H116, and C128 each contribute to the Zn(2+) site. A Bipartite nuclear localization signal motif is present at residues K125–K141.

Expressed in stems, leaf sheaths, and young panicles.

The protein localises to the nucleus. Trans-acting factor that binds specifically to the consensus nucleotide sequence 5'-TNCGTACAA-3'. May be involved in panicle development. This Oryza sativa subsp. japonica (Rice) protein is Squamosa promoter-binding-like protein 4 (SPL4).